The primary structure comprises 784 residues: LPS-assembly protein LptD (784 aa).

A signal peptide spans 1 to 24; the sequence is MKKRIPTLLATMIASALYSHQGLA. 2 disulfide bridges follow: C31–C724 and C173–C725.

Belongs to the LptD family. In terms of assembly, component of the lipopolysaccharide transport and assembly complex. Interacts with LptE and LptA. Post-translationally, contains two intramolecular disulfide bonds.

It localises to the cell outer membrane. Together with LptE, is involved in the assembly of lipopolysaccharide (LPS) at the surface of the outer membrane. In Salmonella typhi, this protein is LPS-assembly protein LptD.